The following is a 188-amino-acid chain: Peptide methionine sulfoxide reductase MsrA (188 aa).

The disordered stretch occupies residues Met1–Gly25. Cys37 is a catalytic residue.

The protein belongs to the MsrA Met sulfoxide reductase family.

The catalysed reaction is L-methionyl-[protein] + [thioredoxin]-disulfide + H2O = L-methionyl-(S)-S-oxide-[protein] + [thioredoxin]-dithiol. The enzyme catalyses [thioredoxin]-disulfide + L-methionine + H2O = L-methionine (S)-S-oxide + [thioredoxin]-dithiol. Has an important function as a repair enzyme for proteins that have been inactivated by oxidation. Catalyzes the reversible oxidation-reduction of methionine sulfoxide in proteins to methionine. This is Peptide methionine sulfoxide reductase MsrA from Methanosarcina acetivorans (strain ATCC 35395 / DSM 2834 / JCM 12185 / C2A).